The following is a 62-amino-acid chain: Zinc finger-containing protein P28b (62 aa).

The RING-type; degenerate zinc-finger motif lies at 1 to 46 (MKLFTQNDRYFGLLDSCTHIFCITCINIWHKTRRETGASDNCPICR).

In Vaccinia virus (strain Western Reserve) (VACV), this protein is Zinc finger-containing protein P28b.